The following is a 358-amino-acid chain: 3-dehydroquinate synthase (358 aa).

NAD(+) is bound by residues 102-106 (GVVGD), 126-127 (TT), Lys139, and Lys148. Residues Glu181, His244, and His260 each coordinate Zn(2+).

Belongs to the sugar phosphate cyclases superfamily. Dehydroquinate synthase family. Co(2+) serves as cofactor. Requires Zn(2+) as cofactor. NAD(+) is required as a cofactor.

The protein localises to the cytoplasm. It carries out the reaction 7-phospho-2-dehydro-3-deoxy-D-arabino-heptonate = 3-dehydroquinate + phosphate. It functions in the pathway metabolic intermediate biosynthesis; chorismate biosynthesis; chorismate from D-erythrose 4-phosphate and phosphoenolpyruvate: step 2/7. Its function is as follows. Catalyzes the conversion of 3-deoxy-D-arabino-heptulosonate 7-phosphate (DAHP) to dehydroquinate (DHQ). The chain is 3-dehydroquinate synthase from Symbiobacterium thermophilum (strain DSM 24528 / JCM 14929 / IAM 14863 / T).